The primary structure comprises 200 residues: Adenylate kinase (200 aa).

Residue 10 to 15 (GAGKGT) coordinates ATP. Positions 30–59 (STGDLFRANISQQTELGKLAKSYMDAGNLV) are NMP. AMP is bound by residues Thr31, Arg36, 57–59 (NLV), 84–87 (GFPR), and Gln91. The tract at residues 125–163 (GRRVCRNDSAHVFHVTYTPPKKEGVCDVCGGELYQRDDD) is LID. ATP contacts are provided by residues Arg126 and 136-137 (VF). 2 residues coordinate AMP: Arg160 and Arg171.

The protein belongs to the adenylate kinase family. Monomer.

The protein localises to the cytoplasm. It carries out the reaction AMP + ATP = 2 ADP. Its pathway is purine metabolism; AMP biosynthesis via salvage pathway; AMP from ADP: step 1/1. In terms of biological role, catalyzes the reversible transfer of the terminal phosphate group between ATP and AMP. Plays an important role in cellular energy homeostasis and in adenine nucleotide metabolism. This is Adenylate kinase from Streptomyces lividans.